An 841-amino-acid polypeptide reads, in one-letter code: Probable alpha-glucuronidase A (841 aa).

The signal sequence occupies residues Met1–Ala20. Asn51, Asn76, Asn85, Asn149, Asn222, Asn279, Asn310, Asn343, Asn450, Asn465, Asn527, Asn576, Asn682, Asn723, and Asn732 each carry an N-linked (GlcNAc...) asparagine glycan.

Belongs to the glycosyl hydrolase 67 family.

It localises to the secreted. It carries out the reaction an alpha-D-glucuronoside + H2O = D-glucuronate + an alcohol. Alpha-glucuronidase involved in the hydrolysis of xylan, a major structural heterogeneous polysaccharide found in plant biomass representing the second most abundant polysaccharide in the biosphere, after cellulose. Releases 4-O-methylglucuronic acid from xylan. The polypeptide is Probable alpha-glucuronidase A (aguA) (Aspergillus niger).